We begin with the raw amino-acid sequence, 279 residues long: Bis(5'-nucleosyl)-tetraphosphatase, symmetrical (279 aa).

Belongs to the Ap4A hydrolase family.

It catalyses the reaction P(1),P(4)-bis(5'-adenosyl) tetraphosphate + H2O = 2 ADP + 2 H(+). In terms of biological role, hydrolyzes diadenosine 5',5'''-P1,P4-tetraphosphate to yield ADP. The polypeptide is Bis(5'-nucleosyl)-tetraphosphatase, symmetrical (Edwardsiella ictaluri (strain 93-146)).